Reading from the N-terminus, the 104-residue chain is Large ribosomal subunit protein uL24 (104 aa).

This sequence belongs to the universal ribosomal protein uL24 family. In terms of assembly, part of the 50S ribosomal subunit.

One of two assembly initiator proteins, it binds directly to the 5'-end of the 23S rRNA, where it nucleates assembly of the 50S subunit. In terms of biological role, one of the proteins that surrounds the polypeptide exit tunnel on the outside of the subunit. In Chelativorans sp. (strain BNC1), this protein is Large ribosomal subunit protein uL24.